The chain runs to 261 residues: Enolase-phosphatase E1 (261 aa).

Mg(2+)-binding residues include Asp-16 and Glu-18. Residues 153–154 (SS) and Lys-187 contribute to the substrate site. Mg(2+) is bound at residue Asp-212.

The protein belongs to the HAD-like hydrolase superfamily. MasA/MtnC family. Monomer. The cofactor is Mg(2+).

The protein localises to the cytoplasm. The protein resides in the nucleus. It catalyses the reaction 5-methylsulfanyl-2,3-dioxopentyl phosphate + H2O = 1,2-dihydroxy-5-(methylsulfanyl)pent-1-en-3-one + phosphate. Its pathway is amino-acid biosynthesis; L-methionine biosynthesis via salvage pathway; L-methionine from S-methyl-5-thio-alpha-D-ribose 1-phosphate: step 3/6. The protein operates within amino-acid biosynthesis; L-methionine biosynthesis via salvage pathway; L-methionine from S-methyl-5-thio-alpha-D-ribose 1-phosphate: step 4/6. Bifunctional enzyme that catalyzes the enolization of 2,3-diketo-5-methylthiopentyl-1-phosphate (DK-MTP-1-P) into the intermediate 2-hydroxy-3-keto-5-methylthiopentenyl-1-phosphate (HK-MTPenyl-1-P), which is then dephosphorylated to form the acireductone 1,2-dihydroxy-3-keto-5-methylthiopentene (DHK-MTPene). The polypeptide is Enolase-phosphatase E1 (Homo sapiens (Human)).